The sequence spans 603 residues: Phosphoenolpyruvate carboxykinase [GTP] (603 aa).

Substrate contacts are provided by residues arginine 87 and 209 to 211 (YAG). Mn(2+) contacts are provided by lysine 218 and histidine 237. Serine 258 serves as a coordination point for substrate. A GTP-binding site is contributed by 259–264 (GSGKTS). Serine 260 is an active-site residue. Aspartate 275 is a binding site for Mn(2+). A substrate-binding site is contributed by 365–367 (NAR). GTP is bound by residues arginine 367 and arginine 398.

It belongs to the phosphoenolpyruvate carboxykinase [GTP] family. The cofactor is Mn(2+).

The protein localises to the cytoplasm. The catalysed reaction is oxaloacetate + GTP = phosphoenolpyruvate + GDP + CO2. It participates in carbohydrate biosynthesis; gluconeogenesis. Catalyzes the conversion of oxaloacetate (OAA) to phosphoenolpyruvate (PEP), the rate-limiting step in the metabolic pathway that produces glucose from lactate and other precursors derived from the citric acid cycle. The sequence is that of Phosphoenolpyruvate carboxykinase [GTP] from Saccharolobus solfataricus (strain ATCC 35092 / DSM 1617 / JCM 11322 / P2) (Sulfolobus solfataricus).